An 863-amino-acid chain; its full sequence is Ubiquitin carboxyl-terminal hydrolase 13 (863 aa).

Residue Ser-114 is modified to Phosphoserine; by AURKB. Thr-122 bears the Phosphothreonine mark. Residues 187–295 form a UBP-type; degenerate zinc finger; the sequence is PVSKYANNLT…KHLAHFGIDM (109 aa). 4 residues coordinate Zn(2+): Cys-211, Cys-214, Cys-231, and His-244. Lys-311 is covalently cross-linked (Glycyl lysine isopeptide (Lys-Gly) (interchain with G-Cter in SUMO2)). Residues 336 to 861 form the USP domain; the sequence is TGLKNLGNSC…LGYMYFYRRI (526 aa). Cys-345 acts as the Nucleophile in catalysis. Lys-405 participates in a covalent cross-link: Glycyl lysine isopeptide (Lys-Gly) (interchain with G-Cter in SUMO2). UBA domains are found at residues 652–693 and 727–767; these read DIDE…IIVH and QPPE…IFSH. The active-site Proton acceptor is the His-823.

The protein belongs to the peptidase C19 family. Interacts with UFD1. Interacts (via UBA domains) with SIAH2 (when ubiquitinated). Interacts with BAG6; the interaction is direct and may mediate UBL4A deubiquitination. Interacts (via UBA 2 domain) with AMFR; the interaction is direct. Interacts with UBL4A; may be indirect via BAG6. Interacts with NEDD4. Phosphorylated by AURKB at Ser-114; leading to stabilization of cell cycle proteins such as SKP2 and AURKB, but not MCL1. As to expression, highly expressed in ovary and testes.

The protein localises to the cytoplasm. It catalyses the reaction Thiol-dependent hydrolysis of ester, thioester, amide, peptide and isopeptide bonds formed by the C-terminal Gly of ubiquitin (a 76-residue protein attached to proteins as an intracellular targeting signal).. With respect to regulation, specifically inhibited by spautin-1 (specific and potent autophagy inhibitor-1), a derivative of MBCQ that binds to USP13 and inhibits deubiquitinase activity. Regulated by PIK3C3/VPS34-containing complexes. The weak deubiquitinase activity in vitro suggests the existence of some mechanism that activates the enzyme. Its function is as follows. Deubiquitinase that mediates deubiquitination of target proteins such as BECN1, MITF, SKP2 and USP10 and is involved in various processes such as autophagy, endoplasmic reticulum-associated degradation (ERAD), cell cycle progression or DNA damage response. Component of a regulatory loop that controls autophagy and p53/TP53 levels: mediates deubiquitination of BECN1, a key regulator of autophagy, leading to stabilize the PIK3C3/VPS34-containing complexes. Alternatively, forms with NEDD4 a deubiquitination complex, which subsequently stabilizes VPS34 to promote autophagy. Also deubiquitinates USP10, an essential regulator of p53/TP53 stability. In turn, PIK3C3/VPS34-containing complexes regulate USP13 stability, suggesting the existence of a regulatory system by which PIK3C3/VPS34-containing complexes regulate p53/TP53 protein levels via USP10 and USP13. Recruited by nuclear UFD1 and mediates deubiquitination of SKP2, thereby regulating endoplasmic reticulum-associated degradation (ERAD). Also regulates ERAD through the deubiquitination of UBL4A a component of the BAG6/BAT3 complex. Mediates stabilization of SIAH2 independently of deubiquitinase activity: binds ubiquitinated SIAH2 and acts by impairing SIAH2 autoubiquitination. Regulates the cell cycle progression by stabilizing cell cycle proteins such as SKP2 and AURKB. In addition, plays an important role in maintaining genomic stability and in DNA replication checkpoint activation via regulation of RAP80 and TOPBP1. Deubiquitinates the multifunctional protein HMGB1 and subsequently drives its nucleocytoplasmic localization and its secretion. Positively regulates type I and type II interferon signalings by deubiquitinating STAT1 but negatively regulates antiviral response by deubiquitinating STING1. The chain is Ubiquitin carboxyl-terminal hydrolase 13 (USP13) from Homo sapiens (Human).